The sequence spans 205 residues: GTP cyclohydrolase-2 (205 aa).

Position 49 to 53 (49 to 53 (RLHSE)) interacts with GTP. Residues Cys54, Cys65, and Cys67 each contribute to the Zn(2+) site. Residues Gln70, 92–94 (EGR), and Thr114 contribute to the GTP site. Asp126 (proton acceptor) is an active-site residue. The active-site Nucleophile is Arg128. GTP is bound by residues Thr149 and Lys154.

It belongs to the GTP cyclohydrolase II family. Zn(2+) is required as a cofactor.

The enzyme catalyses GTP + 4 H2O = 2,5-diamino-6-hydroxy-4-(5-phosphoribosylamino)-pyrimidine + formate + 2 phosphate + 3 H(+). It functions in the pathway cofactor biosynthesis; riboflavin biosynthesis; 5-amino-6-(D-ribitylamino)uracil from GTP: step 1/4. Catalyzes the conversion of GTP to 2,5-diamino-6-ribosylamino-4(3H)-pyrimidinone 5'-phosphate (DARP), formate and pyrophosphate. The sequence is that of GTP cyclohydrolase-2 from Pseudomonas putida (strain GB-1).